A 250-amino-acid chain; its full sequence is Proteasome subunit alpha type-7-B (250 aa).

Residue Lys62 forms a Glycyl lysine isopeptide (Lys-Gly) (interchain with G-Cter in ubiquitin) linkage.

The protein belongs to the peptidase T1A family. In terms of assembly, component of the 20S core complex of the 26S proteasome. The 26S proteasome is composed of a core protease (CP), known as the 20S proteasome, capped at one or both ends by the 19S regulatory particle (RP/PA700). The 20S proteasome core is composed of 28 subunits that are arranged in four stacked rings, resulting in a barrel-shaped structure. The two end rings are each formed by seven alpha subunits, and the two central rings are each formed by seven beta subunits. The catalytic chamber with the active sites is on the inside of the barrel.

It localises to the cytoplasm. The protein localises to the nucleus. Functionally, the proteasome is a multicatalytic proteinase complex which is characterized by its ability to cleave peptides with Arg, Phe, Tyr, Leu, and Glu adjacent to the leaving group at neutral or slightly basic pH. The proteasome has an ATP-dependent proteolytic activity. This is Proteasome subunit alpha type-7-B (PAD2) from Arabidopsis thaliana (Mouse-ear cress).